A 1860-amino-acid chain; its full sequence is Probable helicase with zinc finger domain (1860 aa).

The C3H1-type zinc-finger motif lies at 168-196 (SEEYTLCKRFLEQGLCRYGAQCTSAHSQE). Position 661 to 668 (661 to 668 (GPYGTGKT)) interacts with ATP. The short motif at 787-790 (DEAA) is the DEAA box element. 6 disordered regions span residues 1106-1136 (RSQH…TEPF), 1158-1177 (TPPG…VQRL), 1286-1317 (ERKA…GFPA), 1556-1604 (IQPR…PPDH), 1641-1709 (RQDP…RYPS), and 1749-1860 (MSEE…TYFK). Low complexity predominate over residues 1107–1116 (SQHPPQQGPG). The span at 1286–1298 (ERKAPELKEKQGD) shows a compositional bias: basic and acidic residues. Residues 1301–1313 (SVQNKSPEPQSNM) show a composition bias toward polar residues. The segment covering 1641–1660 (RQDPGPLQHQQQKQQLQAPQ) has biased composition (low complexity). Composition is skewed to pro residues over residues 1760–1769 (QPPPPPPPHP) and 1783–1794 (PLLPSKQTPPDP). Over residues 1847–1860 (GSSNSSNGYYTYFK) the composition is skewed to low complexity.

The protein belongs to the DNA2/NAM7 helicase family.

Its subcellular location is the nucleus. May act as a helicase. In Danio rerio (Zebrafish), this protein is Probable helicase with zinc finger domain (helz).